Consider the following 660-residue polypeptide: Acetyl-coenzyme A synthetase (660 aa).

CoA is bound by residues 197–200 and threonine 317; that span reads RGGK. ATP contacts are provided by residues 397 to 399, 421 to 426, aspartate 512, and arginine 528; these read GEP and DTWWQT. Position 536 (serine 536) interacts with CoA. Arginine 539 contacts ATP. Positions 550, 552, and 555 each coordinate Mg(2+). An N6-acetyllysine modification is found at lysine 625.

This sequence belongs to the ATP-dependent AMP-binding enzyme family. Mg(2+) serves as cofactor. Acetylated. Deacetylation by the SIR2-homolog deacetylase activates the enzyme.

It catalyses the reaction acetate + ATP + CoA = acetyl-CoA + AMP + diphosphate. Functionally, catalyzes the conversion of acetate into acetyl-CoA (AcCoA), an essential intermediate at the junction of anabolic and catabolic pathways. AcsA undergoes a two-step reaction. In the first half reaction, AcsA combines acetate with ATP to form acetyl-adenylate (AcAMP) intermediate. In the second half reaction, it can then transfer the acetyl group from AcAMP to the sulfhydryl group of CoA, forming the product AcCoA. The protein is Acetyl-coenzyme A synthetase of Burkholderia thailandensis (strain ATCC 700388 / DSM 13276 / CCUG 48851 / CIP 106301 / E264).